The primary structure comprises 413 residues: Cardiolipin synthase B (413 aa).

PLD phosphodiesterase domains lie at 108-135 and 285-312; these read VFRR…SSEH and RRRP…DPLS. Active-site residues include His113, Lys115, Asp120, His290, Lys292, and Asp297. A disordered region spans residues 388 to 413; the sequence is TQVDPPAQPTMETQDRVETENTGVNP.

It belongs to the phospholipase D family. Cardiolipin synthase subfamily. ClsB sub-subfamily.

The protein localises to the cell membrane. It carries out the reaction 2 a 1,2-diacyl-sn-glycero-3-phospho-(1'-sn-glycerol) = a cardiolipin + glycerol. Functionally, catalyzes the phosphatidyl group transfer from one phosphatidylglycerol molecule to another to form cardiolipin (CL) (diphosphatidylglycerol) and glycerol. In Shigella flexneri, this protein is Cardiolipin synthase B.